A 117-amino-acid chain; its full sequence is Big defensin (117 aa).

The N-terminal stretch at 1-23 (MEKKTAYCLLFLVLLVPYTALGA) is a signal peptide. A propeptide spanning residues 24–33 (VLKRAPAKKE) is cleaved from the precursor. Disulfide bonds link Cys82/Cys112, Cys89/Cys107, and Cys93/Cys113.

Belongs to the big defensin family.

The protein resides in the secreted. Functionally, significantly inhibits the growth of Gram-negative and Gram-positive bacteria and fungi in vitro. The sequence is that of Big defensin from Branchiostoma belcheri (Amphioxus).